A 35-amino-acid polypeptide reads, in one-letter code: MSDIN-like toxin proprotein 8 (35 aa).

The propeptide occupies methionine 1–proline 10. The segment at residues phenylalanine 11–proline 18 is a cross-link (cyclopeptide (Phe-Pro)). Positions cysteine 19–cysteine 35 are excised as a propeptide.

The protein belongs to the MSDIN fungal toxin family. Post-translationally, processed by the macrocyclase-peptidase enzyme POPB to yield a toxic cyclic octapeptide. POPB first removes 10 residues from the N-terminus. Conformational trapping of the remaining peptide forces the enzyme to release this intermediate rather than proceed to macrocyclization. The enzyme rebinds the remaining peptide in a different conformation and catalyzes macrocyclization of the N-terminal 8 residues. As to expression, expressed in basidiocarps.

Its function is as follows. Probable toxin that belongs to the MSDIN-like toxin family responsible for a large number of food poisoning cases and deaths. In Amanita exitialis (Guangzhou destroying angel), this protein is MSDIN-like toxin proprotein 8.